Reading from the N-terminus, the 282-residue chain is Fused uL13/uS9 ribosomal subunit protein (282 aa).

The segment at 1–141 (MLLMIINGEG…LGEISELLGA (141 aa)) is large ribosomal subunit protein uL13. The small ribosomal subunit protein uS9 stretch occupies residues 150 to 282 (MKKVIHTSGK…ARARRQKSYR (133 aa)). The tract at residues 259–282 (DPRRSEPKKYGGRGARARRQKSYR) is disordered. Positions 273-282 (ARARRQKSYR) are enriched in basic residues.

The protein in the N-terminal section; belongs to the universal ribosomal protein uL13 family. In the C-terminal section; belongs to the universal ribosomal protein uS9 family. In terms of assembly, L13 is part of the 50S ribosomal subunit. S9 is part of the 30S ribosomal subunit.

Functionally, L13 protein is one of the early assembly proteins of the 50S ribosomal subunit, although it is not seen to bind rRNA by itself. It is important during the early stages of 50S assembly. This Methanothermobacter thermautotrophicus (strain ATCC 29096 / DSM 1053 / JCM 10044 / NBRC 100330 / Delta H) (Methanobacterium thermoautotrophicum) protein is Fused uL13/uS9 ribosomal subunit protein (rpl13/rps9).